Consider the following 491-residue polypeptide: Probable aspartyl aminopeptidase (491 aa).

His90 contacts Zn(2+). Substrate is bound at residue His168. Asp278 is a Zn(2+) binding site. Glu315 contacts substrate. 2 residues coordinate Zn(2+): Glu316 and Asp361. The substrate site is built by Asp361, His364, Lys389, and Tyr396. His455 lines the Zn(2+) pocket.

Belongs to the peptidase M18 family. Tetrahedron-shaped homododecamer built from six homodimers. The cofactor is Zn(2+).

The protein resides in the cytoplasm. It catalyses the reaction Release of an N-terminal aspartate or glutamate from a peptide, with a preference for aspartate.. Its function is as follows. Likely to play an important role in intracellular protein and peptide metabolism. The polypeptide is Probable aspartyl aminopeptidase (Ricinus communis (Castor bean)).